The following is a 67-amino-acid chain: ATP synthase F(0) complex subunit 8 (67 aa).

Residues 8-24 (TWLIMILSMILTLFITF) traverse the membrane as a helical segment. N6-acetyllysine; alternate is present on K54. K54 is subject to N6-succinyllysine; alternate. K57 bears the N6-acetyllysine mark.

Belongs to the ATPase protein 8 family. As to quaternary structure, component of the ATP synthase complex composed at least of ATP5F1A/subunit alpha, ATP5F1B/subunit beta, ATP5MC1/subunit c (homooctomer), MT-ATP6/subunit a, MT-ATP8/subunit 8, ATP5ME/subunit e, ATP5MF/subunit f, ATP5MG/subunit g, ATP5MK/subunit k, ATP5MJ/subunit j, ATP5F1C/subunit gamma, ATP5F1D/subunit delta, ATP5F1E/subunit epsilon, ATP5PF/subunit F6, ATP5PB/subunit b, ATP5PD/subunit d, ATP5PO/subunit OSCP. ATP synthase complex consists of a soluble F(1) head domain (subunits alpha(3) and beta(3)) - the catalytic core - and a membrane F(0) domain - the membrane proton channel (subunits c, a, 8, e, f, g, k and j). These two domains are linked by a central stalk (subunits gamma, delta, and epsilon) rotating inside the F1 region and a stationary peripheral stalk (subunits F6, b, d, and OSCP). Interacts with PRICKLE3.

The protein resides in the mitochondrion membrane. Subunit 8, of the mitochondrial membrane ATP synthase complex (F(1)F(0) ATP synthase or Complex V) that produces ATP from ADP in the presence of a proton gradient across the membrane which is generated by electron transport complexes of the respiratory chain. ATP synthase complex consist of a soluble F(1) head domain - the catalytic core - and a membrane F(1) domain - the membrane proton channel. These two domains are linked by a central stalk rotating inside the F(1) region and a stationary peripheral stalk. During catalysis, ATP synthesis in the catalytic domain of F(1) is coupled via a rotary mechanism of the central stalk subunits to proton translocation. In vivo, can only synthesize ATP although its ATP hydrolase activity can be activated artificially in vitro. Part of the complex F(0) domain. This chain is ATP synthase F(0) complex subunit 8, found in Phoca vitulina (Harbor seal).